Reading from the N-terminus, the 231-residue chain is Acyl-protein thioesterase 2 (231 aa).

The S-palmitoyl cysteine moiety is linked to residue cysteine 2. Serine 82 carries the post-translational modification Phosphoserine. Active-site charge relay system residues include serine 122, aspartate 176, and histidine 210.

The protein belongs to the AB hydrolase superfamily. AB hydrolase 2 family.

It localises to the cytoplasm. The catalysed reaction is S-hexadecanoyl-L-cysteinyl-[protein] + H2O = L-cysteinyl-[protein] + hexadecanoate + H(+). The enzyme catalyses prostaglandin E2 1-glyceryl ester + H2O = prostaglandin E2 + glycerol + H(+). It catalyses the reaction 1-hexadecanoyl-sn-glycero-3-phosphocholine + H2O = sn-glycerol 3-phosphocholine + hexadecanoate + H(+). It carries out the reaction 1-octadecanoyl-sn-glycero-3-phosphocholine + H2O = octadecanoate + sn-glycerol 3-phosphocholine + H(+). The catalysed reaction is 1-hexadecanoyl-sn-glycero-3-phosphate + H2O = sn-glycerol 3-phosphate + hexadecanoate + H(+). The enzyme catalyses 1-hexadecanoyl-sn-glycero-3-phospho-L-serine + H2O = sn-glycero-3-phospho-L-serine + hexadecanoate + H(+). Acts as an acyl-protein thioesterase hydrolyzing fatty acids from S-acylated cysteine residues in proteins such as trimeric G alpha proteins, GSDMD, GAP43, ZDHHC6 or HRAS. Deacylates GAP43. Mediates depalmitoylation of ZDHHC6. Has lysophospholipase activity. Hydrolyzes prostaglandin glycerol esters (PG-Gs) in the following order prostaglandin D2-glycerol ester (PGD2-G) &gt; prostaglandin E2 glycerol ester (PGE2-G) &gt; prostaglandin F2-alpha-glycerol ester (PGF2-alpha-G). Hydrolyzes 1-arachidonoylglycerol but not 2-arachidonoylglycerol or arachidonoylethanolamide. In Rattus norvegicus (Rat), this protein is Acyl-protein thioesterase 2 (Lypla2).